Here is a 352-residue protein sequence, read N- to C-terminus: Alanine racemase (352 aa).

The active-site Proton acceptor; specific for D-alanine is the K33. K33 is subject to N6-(pyridoxal phosphate)lysine. Position 129 (R129) interacts with substrate. The Proton acceptor; specific for L-alanine role is filled by Y250. M298 contributes to the substrate binding site.

This sequence belongs to the alanine racemase family. Pyridoxal 5'-phosphate is required as a cofactor.

The catalysed reaction is L-alanine = D-alanine. The protein operates within amino-acid biosynthesis; D-alanine biosynthesis; D-alanine from L-alanine: step 1/1. Functionally, catalyzes the interconversion of L-alanine and D-alanine. May also act on other amino acids. The chain is Alanine racemase (alr) from Neisseria meningitidis serogroup B (strain ATCC BAA-335 / MC58).